A 550-amino-acid chain; its full sequence is Spermatogenesis-associated protein 2 (550 aa).

The 74-residue stretch at 83–156 (TVGTAFATLE…YNVRDHPGGA (74 aa)) folds into the PUB domain. The PIM motif motif lies at 320–337 (YHLSSLDEVDLYTERGLG). Positions 457–480 (SKPVGSGPSPVGSLVSSGSSSSGG) are disordered.

This sequence belongs to the SPATA2 family.

It localises to the cytoplasm. The protein localises to the nucleus. Its function is as follows. Bridging factor that mediates the recruitment of cyld to the LUBAC complex, thereby regulating TNF-alpha-induced necroptosis. Required to activate the 'Met-1'- (linear) and 'Lys-63'-linked deubiquitinase activities of cyld. This is Spermatogenesis-associated protein 2 from Danio rerio (Zebrafish).